Here is a 1064-residue protein sequence, read N- to C-terminus: Adenylate cyclase type 4 (1064 aa).

The Cytoplasmic portion of the chain corresponds to M1–P28. A run of 6 helical transmembrane segments spans residues L29–A50, F61–S80, G94–W117, V120–M138, A141–W162, and L170–Y190. At H191–K582 the chain is on the cytoplasmic side. Mg(2+)-binding residues include D278, I279, and D322. Residues D278 to T283, L320 to D322, and R366 contribute to the ATP site. Residues D498–T523 are disordered. S517 carries the phosphoserine modification. At T533 the chain carries Phosphothreonine. Helical transmembrane passes span Y583–T604, A608–E630, and V661–V684. At S685–P707 the chain is on the extracellular side. 2 N-linked (GlcNAc...) asparagine glycosylation sites follow: N694 and N701. The next 3 helical transmembrane spans lie at A708–L733, L741–W761, and M788–A804. Topologically, residues R805–S1064 are cytoplasmic. ATP-binding positions include K914, D994–W996, N1001–R1005, and K1041.

It belongs to the adenylyl cyclase class-4/guanylyl cyclase family. Mg(2+) serves as cofactor. The cofactor is Mn(2+). As to expression, widely distributed.

The protein resides in the cell membrane. It localises to the cytoplasm. It catalyses the reaction ATP = 3',5'-cyclic AMP + diphosphate. Activated by forskolin. Insensitive to calcium/calmodulin. Stimulated by GNAS and by the G-protein beta and gamma subunit complex. Functionally, catalyzes the formation of the signaling molecule cAMP in response to G-protein signaling. The chain is Adenylate cyclase type 4 (Adcy4) from Rattus norvegicus (Rat).